The primary structure comprises 182 residues: Ribulose bisphosphate carboxylase small subunit, chloroplastic 4 (182 aa).

The transit peptide at 1 to 41 directs the protein to the chloroplast; the sequence is MAATMMNKTVVLSKGCTKPSAVPKVSINRKGFLNTAMNKKR.

The protein belongs to the RuBisCO small chain family. In terms of assembly, heterohexadecamer of 8 large and 8 small subunits.

It localises to the plastid. The protein resides in the chloroplast. In terms of biological role, ruBisCO catalyzes two reactions: the carboxylation of D-ribulose 1,5-bisphosphate, the primary event in carbon dioxide fixation, as well as the oxidative fragmentation of the pentose substrate. Both reactions occur simultaneously and in competition at the same active site. Although the small subunit is not catalytic it is essential for maximal activity. The sequence is that of Ribulose bisphosphate carboxylase small subunit, chloroplastic 4 from Acetabularia peniculus (Green alga).